We begin with the raw amino-acid sequence, 500 residues long: Potassium voltage-gated channel subfamily V member 1 (500 aa).

Topologically, residues 1–210 are cytoplasmic; that stretch reads MPSSGRALLD…EKPGSSTAAR (210 aa). The segment covering 168-181 has biased composition (basic and acidic residues); the sequence is KKDTEDQESQHESE. A disordered region spans residues 168 to 189; that stretch reads KKDTEDQESQHESEQDFSQGPC. Residues 211–231 traverse the membrane as a helical segment; sequence IFGVISIIFVVVSIINMALMS. Over 232 to 238 the chain is Extracellular; the sequence is AELSWLD. A helical membrane pass occupies residues 239 to 259; the sequence is LQLLEILEYVCISWFTGEFVL. The Cytoplasmic segment spans residues 260-276; sequence RFLCVRDRCRFLRKVPN. The helical transmembrane segment at 277–297 threads the bilayer; sequence IIDLLAILPFYITLLVESLSG. The Extracellular segment spans residues 298–309; sequence SQTTQELENVGR. A helical; Voltage-sensor membrane pass occupies residues 310 to 331; sequence IVQVLRLLRALRMLKLGRHSTG. Residues 332–345 are Cytoplasmic-facing; it reads LRSLGMTITQCYEE. A helical membrane pass occupies residues 346–366; sequence VGLLLLFLSVGISIFSTVEYF. Positions 392 to 397 match the Selectivity filter motif; it reads TVGYGD. A helical transmembrane segment spans residues 407–427; that stretch reads IVAFMCILSGILVLALPIAII. Over 428 to 500 the chain is Cytoplasmic; it reads NDRFSACYFT…RSSGGDDFWF (73 aa).

It belongs to the potassium channel family. V (TC 1.A.1.2) subfamily. Kv8.1/KCNV1 sub-subfamily. Heteromultimer with KCNB1 and KCNB2. Interacts with KCNC4 and KCND1. Detected in brain.

The protein localises to the cell membrane. Functionally, potassium channel subunit that does not form functional channels by itself. Modulates KCNB1 and KCNB2 channel activity by shifting the threshold for inactivation to more negative values and by slowing the rate of inactivation. Can down-regulate the channel activity of KCNB1, KCNB2, KCNC4 and KCND1, possibly by trapping them in intracellular membranes. The chain is Potassium voltage-gated channel subfamily V member 1 (KCNV1) from Homo sapiens (Human).